We begin with the raw amino-acid sequence, 436 residues long: Testican-3 (436 aa).

Positions 1–22 are cleaved as a signal peptide; the sequence is MLKVSAVLCVCAAAWCSQSLAA. 8 disulfides stabilise this stretch: C90–C101, C95–C111, C139–C169, C142–C162, C151–C183, C317–C341, C352–C359, and C361–C380. One can recognise a Kazal-like domain in the interval 133–185; it reads GPILSTCKQCPVVYPSPVCGSDGHTYSFQCKLEYQACVLGKQISVKCEGHCPC. Residues 314–380 form the Thyroglobulin type-1 domain; it reads DPPCQTELSN…GSRINGVADC (67 aa). S387 and S392 each carry an O-linked (Xyl...) (glycosaminoglycan) serine glycan. Residues 393 to 436 form a disordered region; that stretch reads GDFHEWTDDEDDEDDIMNDEDEIEDDDEDEGDDDDGGDDHDGYI. Acidic residues predominate over residues 399–430; sequence TDDEDDEDDIMNDEDEIEDDDEDEGDDDDGGD.

Contains chondroitin sulfate and heparan sulfate O-linked oligosaccharides. As to expression, expressed in brain.

The protein localises to the secreted. It localises to the extracellular space. Its subcellular location is the extracellular matrix. Its function is as follows. May participate in diverse steps of neurogenesis. Inhibits the processing of pro-matrix metalloproteinase 2 (MMP-2) by MT1-MMP and MT3-MMP. May interfere with tumor invasion. The polypeptide is Testican-3 (SPOCK3) (Pongo abelii (Sumatran orangutan)).